A 369-amino-acid chain; its full sequence is Phospho-N-acetylmuramoyl-pentapeptide-transferase (369 aa).

10 consecutive transmembrane segments (helical) span residues 2–22 (IALL…TPLF), 55–75 (TVVV…MWMM), 86–106 (GLLL…DDFI), 120–140 (AKLI…LQFP), 163–183 (LAFG…NLII), 196–216 (LDGL…IMGI), 239–259 (PMDL…FLWW), 266–286 (IFMG…FAIL), 291–311 (LLLA…IIQV), and 348–368 (ILAG…WVVL).

Belongs to the glycosyltransferase 4 family. MraY subfamily. Mg(2+) is required as a cofactor.

Its subcellular location is the cell membrane. It carries out the reaction UDP-N-acetyl-alpha-D-muramoyl-L-alanyl-gamma-D-glutamyl-meso-2,6-diaminopimeloyl-D-alanyl-D-alanine + di-trans,octa-cis-undecaprenyl phosphate = di-trans,octa-cis-undecaprenyl diphospho-N-acetyl-alpha-D-muramoyl-L-alanyl-D-glutamyl-meso-2,6-diaminopimeloyl-D-alanyl-D-alanine + UMP. It participates in cell wall biogenesis; peptidoglycan biosynthesis. Catalyzes the initial step of the lipid cycle reactions in the biosynthesis of the cell wall peptidoglycan: transfers peptidoglycan precursor phospho-MurNAc-pentapeptide from UDP-MurNAc-pentapeptide onto the lipid carrier undecaprenyl phosphate, yielding undecaprenyl-pyrophosphoryl-MurNAc-pentapeptide, known as lipid I. This Paenarthrobacter aurescens (strain TC1) protein is Phospho-N-acetylmuramoyl-pentapeptide-transferase.